A 937-amino-acid chain; its full sequence is Isoleucine--tRNA ligase (937 aa).

Positions 58-68 (PYANGHIHLGT) match the 'HIGH' region motif. Residue Glu-566 coordinates L-isoleucyl-5'-AMP. A 'KMSKS' region motif is present at residues 607–611 (KMSKS). Lys-610 contacts ATP. Residues Cys-906, Cys-909, Cys-925, and Cys-928 each coordinate Zn(2+).

This sequence belongs to the class-I aminoacyl-tRNA synthetase family. IleS type 1 subfamily. In terms of assembly, monomer. It depends on Zn(2+) as a cofactor.

It localises to the cytoplasm. It catalyses the reaction tRNA(Ile) + L-isoleucine + ATP = L-isoleucyl-tRNA(Ile) + AMP + diphosphate. In terms of biological role, catalyzes the attachment of isoleucine to tRNA(Ile). As IleRS can inadvertently accommodate and process structurally similar amino acids such as valine, to avoid such errors it has two additional distinct tRNA(Ile)-dependent editing activities. One activity is designated as 'pretransfer' editing and involves the hydrolysis of activated Val-AMP. The other activity is designated 'posttransfer' editing and involves deacylation of mischarged Val-tRNA(Ile). The sequence is that of Isoleucine--tRNA ligase from Lawsonia intracellularis (strain PHE/MN1-00).